A 249-amino-acid chain; its full sequence is uncharacterized protein (249 aa).

An ATP-binding site is contributed by 7 to 14 (GKGGCGKS).

This is an uncharacterized protein from Methanocaldococcus jannaschii (strain ATCC 43067 / DSM 2661 / JAL-1 / JCM 10045 / NBRC 100440) (Methanococcus jannaschii).